A 211-amino-acid chain; its full sequence is Glycerol-3-phosphate acyltransferase (211 aa).

The next 5 membrane-spanning stretches (helical) occupy residues 5 to 25, 55 to 75, 85 to 105, 126 to 146, and 168 to 188; these read VILGLLALISYLLGSIPTGYL, GPGLVTFLVDVGKGLGAILVA, PVPAGWFEFVLLAIAFIAVLA, VLLALNAPTALATFGVFLVVL, and WFFTQSWPFVGFSVIAGAFVI.

The protein belongs to the PlsY family. As to quaternary structure, probably interacts with PlsX.

The protein localises to the cell inner membrane. It carries out the reaction an acyl phosphate + sn-glycerol 3-phosphate = a 1-acyl-sn-glycero-3-phosphate + phosphate. It functions in the pathway lipid metabolism; phospholipid metabolism. In terms of biological role, catalyzes the transfer of an acyl group from acyl-phosphate (acyl-PO(4)) to glycerol-3-phosphate (G3P) to form lysophosphatidic acid (LPA). This enzyme utilizes acyl-phosphate as fatty acyl donor, but not acyl-CoA or acyl-ACP. This is Glycerol-3-phosphate acyltransferase from Thermosynechococcus vestitus (strain NIES-2133 / IAM M-273 / BP-1).